Here is a 299-residue protein sequence, read N- to C-terminus: Taste receptor type 2 member 45 (299 aa).

Residue M1 is a topological domain, extracellular. Residues I2–F22 traverse the membrane as a helical segment. Residues A23–R55 lie on the Cytoplasmic side of the membrane. The chain crosses the membrane as a helical span at residues V56–C76. Over S77 to P98 the chain is Extracellular. A helical membrane pass occupies residues A99–L119. Over R120 to K126 the chain is Cytoplasmic. A helical membrane pass occupies residues S127–V147. Residues N148 to T178 lie on the Extracellular side of the membrane. A glycan (N-linked (GlcNAc...) asparagine) is linked at N161. The chain crosses the membrane as a helical span at residues V179–V199. Residues C200–Q229 lie on the Cytoplasmic side of the membrane. The chain crosses the membrane as a helical span at residues T230 to W250. Residues S251 to P259 are Extracellular-facing. A helical membrane pass occupies residues V260–I280. Residues W281–Y299 are Cytoplasmic-facing.

This sequence belongs to the G-protein coupled receptor T2R family. In terms of tissue distribution, expressed in subsets of taste receptor cells of the tongue and exclusively in gustducin-positive cells.

It is found in the membrane. In terms of biological role, receptor that may play a role in the perception of bitterness and is gustducin-linked. May play a role in sensing the chemical composition of the gastrointestinal content. The activity of this receptor may stimulate alpha gustducin, mediate PLC-beta-2 activation and lead to the gating of TRPM5. The chain is Taste receptor type 2 member 45 (TAS2R45) from Homo sapiens (Human).